The following is a 341-amino-acid chain: Glycerol-3-phosphate dehydrogenase [NAD(P)+] (341 aa).

Ser-15, Trp-16, Arg-36, and Lys-110 together coordinate NADPH. Sn-glycerol 3-phosphate is bound by residues Lys-110, Gly-139, and Ser-141. Ala-143 lines the NADPH pocket. Sn-glycerol 3-phosphate-binding residues include Lys-194, Asp-247, Ser-257, Arg-258, and Asn-259. The active-site Proton acceptor is Lys-194. Arg-258 provides a ligand contact to NADPH. 2 residues coordinate NADPH: Val-282 and Glu-284.

Belongs to the NAD-dependent glycerol-3-phosphate dehydrogenase family.

It localises to the cytoplasm. The enzyme catalyses sn-glycerol 3-phosphate + NAD(+) = dihydroxyacetone phosphate + NADH + H(+). It catalyses the reaction sn-glycerol 3-phosphate + NADP(+) = dihydroxyacetone phosphate + NADPH + H(+). It participates in membrane lipid metabolism; glycerophospholipid metabolism. Catalyzes the reduction of the glycolytic intermediate dihydroxyacetone phosphate (DHAP) to sn-glycerol 3-phosphate (G3P), the key precursor for phospholipid synthesis. This Stenotrophomonas maltophilia (strain K279a) protein is Glycerol-3-phosphate dehydrogenase [NAD(P)+].